Consider the following 111-residue polypeptide: DNA-directed RNA polymerase subunit Rpo11 (111 aa).

This sequence belongs to the archaeal Rpo11/eukaryotic RPB11/RPC19 RNA polymerase subunit family. As to quaternary structure, part of the RNA polymerase complex.

It is found in the cytoplasm. The catalysed reaction is RNA(n) + a ribonucleoside 5'-triphosphate = RNA(n+1) + diphosphate. In terms of biological role, DNA-dependent RNA polymerase (RNAP) catalyzes the transcription of DNA into RNA using the four ribonucleoside triphosphates as substrates. The protein is DNA-directed RNA polymerase subunit Rpo11 of Thermoplasma acidophilum (strain ATCC 25905 / DSM 1728 / JCM 9062 / NBRC 15155 / AMRC-C165).